The chain runs to 357 residues: NADH-quinone oxidoreductase subunit H (357 aa).

Transmembrane regions (helical) follow at residues 20–40, 92–112, 127–147, 165–185, 203–223, 259–279, 294–314, and 329–349; these read WLLVWTLVKIVAVVLPLMGCV, ALFVIAPIMTIMPALAAWAVI, LLFVMAITSLEVYGVIVAGWA, ISYEIAMGFVLVIVLMVSGSL, GLTFLSWNWLPLLPMFVIYII, FFLAEYANMILISMMATLMFL, IPGWIWLGIKTLFVVTLFIWF, and LGWKVFIPLTLVYLLIVAIWM.

This sequence belongs to the complex I subunit 1 family. In terms of assembly, NDH-1 is composed of 14 different subunits. Subunits NuoA, H, J, K, L, M, N constitute the membrane sector of the complex.

It is found in the cell inner membrane. It catalyses the reaction a quinone + NADH + 5 H(+)(in) = a quinol + NAD(+) + 4 H(+)(out). NDH-1 shuttles electrons from NADH, via FMN and iron-sulfur (Fe-S) centers, to quinones in the respiratory chain. The immediate electron acceptor for the enzyme in this species is believed to be ubiquinone. Couples the redox reaction to proton translocation (for every two electrons transferred, four hydrogen ions are translocated across the cytoplasmic membrane), and thus conserves the redox energy in a proton gradient. This subunit may bind ubiquinone. The sequence is that of NADH-quinone oxidoreductase subunit H from Herminiimonas arsenicoxydans.